The sequence spans 186 residues: Adenine phosphoribosyltransferase (186 aa).

This sequence belongs to the purine/pyrimidine phosphoribosyltransferase family. As to quaternary structure, homodimer.

The protein resides in the cytoplasm. It catalyses the reaction AMP + diphosphate = 5-phospho-alpha-D-ribose 1-diphosphate + adenine. The protein operates within purine metabolism; AMP biosynthesis via salvage pathway; AMP from adenine: step 1/1. Catalyzes a salvage reaction resulting in the formation of AMP, that is energically less costly than de novo synthesis. The chain is Adenine phosphoribosyltransferase from Xanthomonas oryzae pv. oryzae (strain PXO99A).